Consider the following 218-residue polypeptide: Small ribosomal subunit protein uS3c (218 aa).

In terms of domain architecture, KH type-2 spans 47–118; sequence VQKNLKISSG…KLNITITRIA (72 aa).

This sequence belongs to the universal ribosomal protein uS3 family. In terms of assembly, part of the 30S ribosomal subunit.

It is found in the plastid. The protein localises to the chloroplast. The chain is Small ribosomal subunit protein uS3c (rps3) from Daucus carota (Wild carrot).